The following is a 280-amino-acid chain: Lysosome-associated membrane glycoprotein 5 (280 aa).

A signal peptide spans 1–29; that stretch reads MDLRVRTLLGGDRLRILLMFFHVMVQTVA. Topologically, residues 30–235 are extracellular; that stretch reads EQEVENLSGL…PVDEQEQLEE (206 aa). 4 N-linked (GlcNAc...) asparagine glycosylation sites follow: N35, N53, N102, and N127. The helical transmembrane segment at 236–256 threads the bilayer; that stretch reads TLPLILGLILGLVIVITLVIY. Residues 257–280 are Cytoplasmic-facing; sequence HIHHKMTANQVQIPRDRSQYKHMG.

Belongs to the LAMP family. In terms of processing, glycosylated. In terms of tissue distribution, in brain, strongly expressed in the globus pallidus/ventral pallidum complex, the substantia nigra pars reticulata and the entopeduncular nucleus (at protein level). Expressed in the external plexiform layer of the olfactory bulb (at protein level). May be weakly expressed in neocortex and striatum (at protein level). Highly expressed in brain; not detected in other tissues tested. Detected in the cingulate cortex, cortical plate and caudate putamen. In neocortex, specifically expressed in neurons of layers II/III and V.

It is found in the cytoplasmic vesicle membrane. The protein resides in the cell membrane. It localises to the cell projection. Its subcellular location is the dendrite. The protein localises to the cytoplasmic vesicle. It is found in the secretory vesicle. The protein resides in the synaptic vesicle membrane. It localises to the growth cone membrane. Its subcellular location is the early endosome membrane. The protein localises to the recycling endosome. It is found in the endoplasmic reticulum-Golgi intermediate compartment membrane. The protein resides in the endosome membrane. In terms of biological role, plays a role in short-term synaptic plasticity in a subset of GABAergic neurons in the brain. The polypeptide is Lysosome-associated membrane glycoprotein 5 (Lamp5) (Mus musculus (Mouse)).